Consider the following 151-residue polypeptide: Large ribosomal subunit protein bL9 (151 aa).

The protein belongs to the bacterial ribosomal protein bL9 family.

Functionally, binds to the 23S rRNA. This Mycoplasmopsis agalactiae (strain NCTC 10123 / CIP 59.7 / PG2) (Mycoplasma agalactiae) protein is Large ribosomal subunit protein bL9.